The chain runs to 485 residues: Catalase isozyme 1 (485 aa).

Catalysis depends on residues His-58 and Asn-131. Position 341 (Tyr-341) interacts with heme.

This sequence belongs to the catalase family. In terms of assembly, homotetramer. The cofactor is heme.

It localises to the peroxisome. The enzyme catalyses 2 H2O2 = O2 + 2 H2O. Occurs in almost all aerobically respiring organisms and serves to protect cells from the toxic effects of hydrogen peroxide. This is Catalase isozyme 1 (CAT1) from Nicotiana plumbaginifolia (Leadwort-leaved tobacco).